An 88-amino-acid chain; its full sequence is MANSKSAKKRALQSEKRRQHNASRRSMLRTYVKRVIAAIKSGDHKAATEAFAIAQPIVDRMATKGLIHKNKAGRQKARLNAKIKAIAA.

Residues 1–27 are disordered; it reads MANSKSAKKRALQSEKRRQHNASRRSM.

Belongs to the bacterial ribosomal protein bS20 family.

In terms of biological role, binds directly to 16S ribosomal RNA. This Shewanella frigidimarina (strain NCIMB 400) protein is Small ribosomal subunit protein bS20.